A 374-amino-acid polypeptide reads, in one-letter code: Queuine tRNA-ribosyltransferase (374 aa).

D89 serves as the catalytic Proton acceptor. Residues 89–93 (DSGGF), D143, Q187, and G214 contribute to the substrate site. The tract at residues 245 to 251 (GVGKPED) is RNA binding. Catalysis depends on D264, which acts as the Nucleophile. An RNA binding; important for wobble base 34 recognition region spans residues 269–273 (TRNAR). Positions 302, 304, 307, and 333 each coordinate Zn(2+).

Belongs to the queuine tRNA-ribosyltransferase family. As to quaternary structure, homodimer. Within each dimer, one monomer is responsible for RNA recognition and catalysis, while the other monomer binds to the replacement base PreQ1. Zn(2+) is required as a cofactor.

The enzyme catalyses 7-aminomethyl-7-carbaguanine + guanosine(34) in tRNA = 7-aminomethyl-7-carbaguanosine(34) in tRNA + guanine. Its pathway is tRNA modification; tRNA-queuosine biosynthesis. Catalyzes the base-exchange of a guanine (G) residue with the queuine precursor 7-aminomethyl-7-deazaguanine (PreQ1) at position 34 (anticodon wobble position) in tRNAs with GU(N) anticodons (tRNA-Asp, -Asn, -His and -Tyr). Catalysis occurs through a double-displacement mechanism. The nucleophile active site attacks the C1' of nucleotide 34 to detach the guanine base from the RNA, forming a covalent enzyme-RNA intermediate. The proton acceptor active site deprotonates the incoming PreQ1, allowing a nucleophilic attack on the C1' of the ribose to form the product. After dissociation, two additional enzymatic reactions on the tRNA convert PreQ1 to queuine (Q), resulting in the hypermodified nucleoside queuosine (7-(((4,5-cis-dihydroxy-2-cyclopenten-1-yl)amino)methyl)-7-deazaguanosine). This chain is Queuine tRNA-ribosyltransferase, found in Shewanella sp. (strain MR-4).